We begin with the raw amino-acid sequence, 449 residues long: UDP-N-acetylmuramoylalanine--D-glutamate ligase (449 aa).

118 to 124 is an ATP binding site; sequence GTNGKTT.

The protein belongs to the MurCDEF family.

It localises to the cytoplasm. It catalyses the reaction UDP-N-acetyl-alpha-D-muramoyl-L-alanine + D-glutamate + ATP = UDP-N-acetyl-alpha-D-muramoyl-L-alanyl-D-glutamate + ADP + phosphate + H(+). It functions in the pathway cell wall biogenesis; peptidoglycan biosynthesis. In terms of biological role, cell wall formation. Catalyzes the addition of glutamate to the nucleotide precursor UDP-N-acetylmuramoyl-L-alanine (UMA). The sequence is that of UDP-N-acetylmuramoylalanine--D-glutamate ligase from Staphylococcus aureus (strain MSSA476).